We begin with the raw amino-acid sequence, 248 residues long: Pyridoxine 5'-phosphate synthase (248 aa).

3-amino-2-oxopropyl phosphate is bound by residues N8 and R19. H44 serves as the catalytic Proton acceptor. Residues R46 and H51 each coordinate 1-deoxy-D-xylulose 5-phosphate. E76 (proton acceptor) is an active-site residue. T106 contributes to the 1-deoxy-D-xylulose 5-phosphate binding site. H200 functions as the Proton donor in the catalytic mechanism. Residues D201 and 223–224 each bind 3-amino-2-oxopropyl phosphate; that span reads GH.

This sequence belongs to the PNP synthase family. In terms of assembly, homooctamer; tetramer of dimers.

The protein resides in the cytoplasm. It carries out the reaction 3-amino-2-oxopropyl phosphate + 1-deoxy-D-xylulose 5-phosphate = pyridoxine 5'-phosphate + phosphate + 2 H2O + H(+). Its pathway is cofactor biosynthesis; pyridoxine 5'-phosphate biosynthesis; pyridoxine 5'-phosphate from D-erythrose 4-phosphate: step 5/5. Its function is as follows. Catalyzes the complicated ring closure reaction between the two acyclic compounds 1-deoxy-D-xylulose-5-phosphate (DXP) and 3-amino-2-oxopropyl phosphate (1-amino-acetone-3-phosphate or AAP) to form pyridoxine 5'-phosphate (PNP) and inorganic phosphate. This Chelativorans sp. (strain BNC1) protein is Pyridoxine 5'-phosphate synthase.